Consider the following 138-residue polypeptide: Holo-[acyl-carrier-protein] synthase (138 aa).

Residues Asp-8 and Glu-57 each contribute to the Mg(2+) site.

The protein belongs to the P-Pant transferase superfamily. AcpS family. Mg(2+) is required as a cofactor.

Its subcellular location is the cytoplasm. The catalysed reaction is apo-[ACP] + CoA = holo-[ACP] + adenosine 3',5'-bisphosphate + H(+). Transfers the 4'-phosphopantetheine moiety from coenzyme A to a Ser of acyl-carrier-protein. The sequence is that of Holo-[acyl-carrier-protein] synthase from Phenylobacterium zucineum (strain HLK1).